The sequence spans 331 residues: MPAESHTVYPAYRFSIAPMLDWTDRHCRYFLRLLSRNTLLYTEMVTTGAIIHGKGDYLAYSEEEHPVALQLGGSDPAALAQCAKLAEARGYDEINLNVGCPSDRVQNGMFGACLMGNAQLVADCVKAMRDVVSIPVTVKTRIGIDDQDSYEFLCDFINTVSGKGECEMFIIHARKAWLSGLSPKENREIPPLDYPRVYQLKRDFPHLTMSINGGIKSLEEAKAHLQHMDGVMVGREAYQNPGILAAVDREIFGSSDTDADPVAVVRAMYPYIERELSQGTYLGHITRHMLGLFQGIPGARQWRRYLSENAHKAGADINVLEHALKLVADKR.

FMN-binding positions include 18–20 (PML) and glutamine 70. Cysteine 100 functions as the Proton donor in the catalytic mechanism. FMN is bound by residues lysine 139, histidine 172, 212 to 214 (NGG), and 234 to 235 (GR).

It belongs to the Dus family. DusA subfamily. FMN serves as cofactor.

The enzyme catalyses 5,6-dihydrouridine(20) in tRNA + NADP(+) = uridine(20) in tRNA + NADPH + H(+). It carries out the reaction 5,6-dihydrouridine(20) in tRNA + NAD(+) = uridine(20) in tRNA + NADH + H(+). It catalyses the reaction 5,6-dihydrouridine(20a) in tRNA + NADP(+) = uridine(20a) in tRNA + NADPH + H(+). The catalysed reaction is 5,6-dihydrouridine(20a) in tRNA + NAD(+) = uridine(20a) in tRNA + NADH + H(+). Functionally, catalyzes the synthesis of 5,6-dihydrouridine (D), a modified base found in the D-loop of most tRNAs, via the reduction of the C5-C6 double bond in target uridines. Specifically modifies U20 and U20a in tRNAs. This chain is tRNA-dihydrouridine(20/20a) synthase, found in Escherichia coli O6:H1 (strain CFT073 / ATCC 700928 / UPEC).